Here is a 122-residue protein sequence, read N- to C-terminus: Biogenesis of lysosome-related organelles complex 1 subunit CNL1 (122 aa).

The span at Met1–Glu10 shows a compositional bias: basic and acidic residues. The disordered stretch occupies residues Met1 to Ile21. The stretch at Glu63–Ile95 forms a coiled coil.

It belongs to the BLOC1S4 family. In terms of assembly, component of the biogenesis of lysosome-related organelles complex-1 (BLOC-1) composed of at least BLI1, BLS1, CNL1, KXD1, SNN1 and VAB2.

It is found in the cytoplasm. In terms of biological role, component of the biogenesis of lysosome-related organelles complex-1 (BLOC-1), a complex that is involved in endosomal cargo sorting. This is Biogenesis of lysosome-related organelles complex 1 subunit CNL1 (CLN1) from Saccharomyces cerevisiae (strain Lalvin QA23) (Baker's yeast).